We begin with the raw amino-acid sequence, 428 residues long: Glutamyl-tRNA reductase (428 aa).

Residues 55–58, S114, 119–121, and Q125 each bind substrate; these read TCNR and ETQ. C56 (nucleophile) is an active-site residue. Residue 194–199 coordinates NADP(+); the sequence is GAGEMI.

This sequence belongs to the glutamyl-tRNA reductase family. Homodimer.

It carries out the reaction (S)-4-amino-5-oxopentanoate + tRNA(Glu) + NADP(+) = L-glutamyl-tRNA(Glu) + NADPH + H(+). Its pathway is porphyrin-containing compound metabolism; protoporphyrin-IX biosynthesis; 5-aminolevulinate from L-glutamyl-tRNA(Glu): step 1/2. Catalyzes the NADPH-dependent reduction of glutamyl-tRNA(Glu) to glutamate 1-semialdehyde (GSA). The chain is Glutamyl-tRNA reductase from Paraburkholderia xenovorans (strain LB400).